Consider the following 295-residue polypeptide: Ethanolamine ammonia-lyase small subunit (295 aa).

Residues Val-207, Glu-228, and Cys-258 each contribute to the adenosylcob(III)alamin site.

This sequence belongs to the EutC family. In terms of assembly, the basic unit is a heterodimer which dimerizes to form tetramers. The heterotetramers trimerize; 6 large subunits form a core ring with 6 small subunits projecting outwards. It depends on adenosylcob(III)alamin as a cofactor.

It localises to the bacterial microcompartment. It carries out the reaction ethanolamine = acetaldehyde + NH4(+). It functions in the pathway amine and polyamine degradation; ethanolamine degradation. Functionally, catalyzes the deamination of various vicinal amino-alcohols to oxo compounds. Allows this organism to utilize ethanolamine as the sole source of nitrogen and carbon in the presence of external vitamin B12. This Escherichia coli (strain 55989 / EAEC) protein is Ethanolamine ammonia-lyase small subunit.